The sequence spans 244 residues: ATP synthase subunit b 2 (244 aa).

A helical transmembrane segment spans residues 2 to 22 (LIDWFTIVAQIINFLILVFLL).

It belongs to the ATPase B chain family. F-type ATPases have 2 components, F(1) - the catalytic core - and F(0) - the membrane proton channel. F(1) has five subunits: alpha(3), beta(3), gamma(1), delta(1), epsilon(1). F(0) has four main subunits: a(1), b(1), b'(1) and c(10-14). The alpha and beta chains form an alternating ring which encloses part of the gamma chain. F(1) is attached to F(0) by a central stalk formed by the gamma and epsilon chains, while a peripheral stalk is formed by the delta, b and b' chains.

Its subcellular location is the cellular thylakoid membrane. In terms of biological role, f(1)F(0) ATP synthase produces ATP from ADP in the presence of a proton or sodium gradient. F-type ATPases consist of two structural domains, F(1) containing the extramembraneous catalytic core and F(0) containing the membrane proton channel, linked together by a central stalk and a peripheral stalk. During catalysis, ATP synthesis in the catalytic domain of F(1) is coupled via a rotary mechanism of the central stalk subunits to proton translocation. Functionally, component of the F(0) channel, it forms part of the peripheral stalk, linking F(1) to F(0). The chain is ATP synthase subunit b 2 from Crocosphaera subtropica (strain ATCC 51142 / BH68) (Cyanothece sp. (strain ATCC 51142)).